A 274-amino-acid chain; its full sequence is uncharacterized protein (274 aa).

The C2 NT-type domain maps to 3–141 (IFIPKARRPT…TIRIGISLKQ (139 aa)).

It to yeast YBL086c.

This is an uncharacterized protein from Schizosaccharomyces pombe (strain 972 / ATCC 24843) (Fission yeast).